A 142-amino-acid chain; its full sequence is Galactose-6-phosphate isomerase subunit LacA (142 aa).

Belongs to the LacAB/RpiB family. Heteromultimeric protein consisting of LacA and LacB.

The catalysed reaction is aldehydo-D-galactose 6-phosphate = keto-D-tagatose 6-phosphate. The protein operates within carbohydrate metabolism; D-galactose 6-phosphate degradation; D-tagatose 6-phosphate from D-galactose 6-phosphate: step 1/1. This chain is Galactose-6-phosphate isomerase subunit LacA, found in Streptococcus mutans serotype c (strain ATCC 700610 / UA159).